We begin with the raw amino-acid sequence, 348 residues long: 5-deoxyribose 1-phosphate isomerase (348 aa).

Substrate is bound by residues R49–A51, R92, and Q199. Residue D240 is the Proton donor of the active site. N250–K251 is a substrate binding site.

This sequence belongs to the EIF-2B alpha/beta/delta subunits family. DrdI subfamily. As to quaternary structure, homodimer.

The catalysed reaction is 5-deoxy-alpha-D-ribose 1-phosphate = 5-deoxy-D-ribulose 1-phosphate. It catalyses the reaction 5-(methylsulfanyl)-alpha-D-ribose 1-phosphate = 5-(methylsulfanyl)-D-ribulose 1-phosphate. It participates in carbohydrate degradation. Its function is as follows. Catalyzes the isomerization of 5-deoxy-alpha-D-ribose 1-phosphate to 5-deoxy-D-ribulose 1-phosphate, as part of a 5-deoxyribose salvage pathway that recycles this toxic radical SAM enzyme by-product to mainstream metabolites. Also seems to be able to catalyze the conversion of methylthioribose-1-phosphate (MTR-1-P) into methylthioribulose-1-phosphate (MTRu-1-P). However this enzyme may not function in methionine salvage in B.thuringiensis since it exists a paralog (MtnA) present in the methionine salvage pathway cluster. The chain is 5-deoxyribose 1-phosphate isomerase from Bacillus thuringiensis serovar kurstaki (strain ATCC 35866 / NRRL B-4488 / HD73).